Here is a 139-residue protein sequence, read N- to C-terminus: Mediator of RNA polymerase II transcription subunit 21 (139 aa).

The segment at 28–58 (DAPPVQLSPNYPEPPATTTVTDDATPFPEQP) is disordered. Residues 43–54 (ATTTVTDDATPF) are compositionally biased toward low complexity. A coiled-coil region spans residues 92-132 (RIAELQVENDLVGQELQKQLEAAEKELKQVQELFGQAADNC).

Belongs to the Mediator complex subunit 21 family. Component of the Mediator complex. Interacts with HUB1.

The protein resides in the nucleus. Functionally, component of the Mediator complex, a coactivator involved in the regulated transcription of nearly all RNA polymerase II-dependent genes. Mediator functions as a bridge to convey information from gene-specific regulatory proteins to the basal RNA polymerase II transcription machinery. Mediator is recruited to promoters by direct interactions with regulatory proteins and serves as a scaffold for the assembly of a functional preinitiation complex with RNA polymerase II and the general transcription factors. Required for embryo development and defense against necrotrophic fungal pathogens. In Arabidopsis thaliana (Mouse-ear cress), this protein is Mediator of RNA polymerase II transcription subunit 21 (MED21).